The primary structure comprises 211 residues: FMN-dependent NADH:quinone oxidoreductase 2 (211 aa).

FMN contacts are provided by residues Ser-10 and 17-19 (SRS).

This sequence belongs to the azoreductase type 1 family. In terms of assembly, homodimer. FMN is required as a cofactor.

It carries out the reaction 2 a quinone + NADH + H(+) = 2 a 1,4-benzosemiquinone + NAD(+). The catalysed reaction is N,N-dimethyl-1,4-phenylenediamine + anthranilate + 2 NAD(+) = 2-(4-dimethylaminophenyl)diazenylbenzoate + 2 NADH + 2 H(+). Quinone reductase that provides resistance to thiol-specific stress caused by electrophilic quinones. In terms of biological role, also exhibits azoreductase activity. Catalyzes the reductive cleavage of the azo bond in aromatic azo compounds to the corresponding amines. The protein is FMN-dependent NADH:quinone oxidoreductase 2 of Listeria monocytogenes serotype 4b (strain F2365).